The chain runs to 115 residues: Ustilagic acid biosynthesis cluster protein orf3 (115 aa).

The N-terminal stretch at 1 to 38 is a signal peptide; it reads MTYSKIACSLGKRGIARAPNQASSFFLLLFLFAKFSQQ. The segment at 42-62 is disordered; it reads SPCLASSGVAKSRGPASTDRP.

It participates in secondary metabolite biosynthesis. Its function is as follows. Part of the gene cluster that mediates the biosynthesis of the glycolipid biosurfactant ustilagic acid (UA). UA is a secreted cellobiose glycolipid that is toxic for many microorganisms and confers biocontrol activity to U.maydis. UA consists of 15,16-dihydroxypalmitic or 2,15,16-trihydroxypalmitic acid, which is O-glycosidically linked to cellobiose at its terminal hydroxyl group. In addition, the cellobiose moiety is acetylated and acylated with a short-chain hydroxy fatty acid. UA biosynthesis starts with omega-hydroxylation of palmitic acid catalyzed by the cytochrome P450 monooxygenase cyp1. Terminal hydroxylation of palmitic acid precedes subterminal hydroxylation catalyzed by the cytochrome P450 monooxygenase cyp2. Sequential glucosylation of the hydroxy fatty acid is probably catalyzed by the glycosyltransferase ugt1. The cellobiose lipid is further decorated by acetylation of the proximal glucose residue and by acylation with a short-chain beta-hydroxy fatty acid at the distal glucose residue. The acyltransferase uat1 may be a good candidate for catalyzing either acetylation or acylation of the cellobiose lipid. The fatty acid synthase fas2 may be involved in synthesis of the carbon backbone of the short-chain beta-hydroxy fatty acid esterified to the cellobiose disaccharide. The secreted UA consists of a mixture of both alpha-hydroxylated and non-hydroxylated glycolipids; therefore, alpha-hydroxylation of the long-chain fatty, catalyzed by the fatty acid hydroxylase ahd1, occurs late in UA biosynthesis and may be the last step before secretion. In Mycosarcoma maydis (Corn smut fungus), this protein is Ustilagic acid biosynthesis cluster protein orf3.